Reading from the N-terminus, the 232-residue chain is Ion-translocating oxidoreductase complex subunit E (232 aa).

6 consecutive transmembrane segments (helical) span residues 18-38 (GLVQ…LTNA), 39-59 (IGLG…VSLV), 69-89 (IPVF…LINA), 93-113 (GLYL…VIIG), 127-147 (AAFD…LLGA), and 182-202 (NFLL…LIAI).

Belongs to the NqrDE/RnfAE family. As to quaternary structure, the complex is composed of six subunits: RnfA, RnfB, RnfC, RnfD, RnfE and RnfG.

The protein localises to the cell inner membrane. Functionally, part of a membrane-bound complex that couples electron transfer with translocation of ions across the membrane. This chain is Ion-translocating oxidoreductase complex subunit E, found in Shewanella loihica (strain ATCC BAA-1088 / PV-4).